We begin with the raw amino-acid sequence, 423 residues long: Voltage-dependent calcium channel gamma-8 subunit (423 aa).

Helical transmembrane passes span 19 to 39 (VQVLLTTIGAFSAFGLMTIAI), 127 to 147 (SSIFPILSAILLLLGGVCVAA), 157 to 177 (IILGAGILFVAAGLSNIIGVI), and 207 to 227 (FGGLSFILAEVIGVLAVNIYI). Ser-251 and Ser-254 each carry phosphoserine. The interval 271–304 (RRSRSSSRGSSEASPSRDASPGGPGGPGFASTDI) is disordered. Positions 276–287 (SSRGSSEASPSR) are enriched in low complexity. A helical transmembrane segment spans residues 318-338 (VAAGLASAGGGGSGAGVGAYG). 2 disordered regions span residues 342–363 (GAAGGGGAGSERDRGSSAGFLT) and 378–423 (VTVT…TTPV). Residues 384-399 (PAAPAPAPAPPAPAAP) show a composition bias toward pro residues. Residues 410-423 (ASNTNTLNRKTTPV) show a composition bias toward polar residues.

The protein belongs to the PMP-22/EMP/MP20 family. CACNG subfamily. Interacts with CACNA1C. Identified in a complex with the L-type calcium channel subunits CACNA1C, CACNA2D1 and either CACNB1 or CACNB2. Acts as an auxiliary subunit for AMPA-selective glutamate receptors (AMPARs). Found in a complex with GRIA1, GRIA2, GRIA3, GRIA4, CNIH2, CNIH3, CACNG2, CACNG3, CACNG4, CACNG5 and CACNG7. Interacts with CNIH2. Found in a complex with GRIA1, GRIA2, GRIA3, GRIA4, DLG4 and CNIH2. In terms of processing, palmitoylated. Probably palmitoylated by ZDHHC3 and ZDHHC7.

It localises to the cell membrane. The protein localises to the postsynaptic density membrane. Regulates the activity of L-type calcium channels that contain CACNA1C as pore-forming subunit. Regulates the trafficking and gating properties of AMPA-selective glutamate receptors (AMPARs). Promotes their targeting to the cell membrane and synapses and modulates their gating properties by slowing their rates of activation, deactivation and desensitization and by mediating their resensitization. Does not show subunit-specific AMPA receptor regulation and regulates all AMPAR subunits. Thought to stabilize the calcium channel in an inactivated (closed) state. This chain is Voltage-dependent calcium channel gamma-8 subunit, found in Mus musculus (Mouse).